Consider the following 1478-residue polypeptide: MELYPGVSPVGLLLLLLLGQGPSQIHGSSGENTLAWQSQQVFWTLKNFPFPCKPKKLELSVLSESVHSLRPSDIKLVAAIGNPEIPLAPGSGTINMEKPQSIKNQPQDVCMGIMTVLSDIIRHFSPSVLMPTCSPGKGTAVHTTAEDLWIQAKELVRRLKDNPQLDFEKDWKLITVFFSNTSQCHLCPSAQQKSHLMRHMEMLWGVLDYLHHEVPRAFVNLVDLSEVLAMDLQHQETGFSPAPEVCKCTETTTLSKAVMQWSYQEAWEDLLASSKFNKHETFAVVFQPFFDEIEPPLKRSSPQDPTTLALRIWNSMMEPVGQKDGLLNTAERKTMKCPSEESPYLFTYKNSNYQARRLKPITKLQMKEGSEFTCPDKNPSNSIPTTVHSLRPADIKIIGALGDSLTAGNGAGASPWNILDVLTEYRGLSWSVGGDETIKTVTTLPNILREFNPSLKGFSVGTGKESTSRASFNQAVAGAKSDGLAGQARKLVDLMKADKTINFQEDWKIITVFIGGNDLCASCSNSTRFSPQNFIDNIKNALDILHAEVPRAFVNMAMVMEITPLRELFNEPTVSCPRNILSRLCPCVLGLGDNSEELSSLVQRNRDYQKKTEELINSGRYDTRDNFTVVVQPLFENVSMPRTPEGVPDKSFFAPDCFHFNAKTHARSAIALWKNMLEPVGHKTRHNNFEIKAPIVCPNQASPFLSTTKNSNLGNGTWMVCEERAPSASPPTSVHTLRPADIQVVAALGDSLTAGNGISSQEGNLTDVSTQYRGLSYSAGGDKTLENVTTLPNILRKFNGNLTGYSVGTGDSSSANAFLNQAVPGAKAENLTSQVRTLVQKMKSDNRVNFNRDWKVITVMIGASDLCDFCTDSNHYSAANFFDHLQNALDILHKEVPRALVNLVDFINPSIIREVFLKNPDKCPVNQSSVLCNCVLTPRKDSYELARLEAFTKSYQSSMLQLVESGRYDTREDFSVVLQPFLLNTKLPVLENGKPDTSFFAPDCIHLNQKFHTQLARALWANMLEPLGKKTDTLDPKGHISLACPTKDQPFLRTFRNSNYKYPTKPAIENWGSDFLCTEKSPSSQVPTSVHELRPADIKVVAAMGDFLTTATGARPSGYKRLATPWRGLSWSIGGDGKLETHTTLPNILKKFNPSITGFSTGTLDNKAGLNVAEEGARAQDMPAQAKTLVKKMKSTPTINLQEDWKLITLLIGNNDLCLYCENPEDNSTKEYVKYIQQALDILYEELPRVFINVVEVMELAGLHHVQGGKCAMPLAVQKNCSCLRHSQNLTAMQELKKLNWNLQSGISELSYWHRYMEREDFAVTVQPFFRNTFIPLNEREGLDLTFFSEDCFYFSDRGHAEMAIALWNNMLEPVGWKTSSNNFIYNRTKLKCPSPERPFLYTLRNSQLLPDKAEEPSNALYWAVPVAAIGGLAVGILGVMLWRTVKPVQQEEEEEDTLPNTSVTQDAVSEKRLKAGN.

The signal sequence occupies residues 1–27; it reads MELYPGVSPVGLLLLLLLGQGPSQIHG. Residues 28–1422 are Extracellular-facing; the sequence is SSGENTLAWQ…KAEEPSNALY (1395 aa). A run of 4 repeats spans residues 43–351, 366–711, 712–1058, and 1068–1407. A 4 X 308-326 AA approximate repeats region spans residues 43-1407; the sequence is WTLKNFPFPC…RPFLYTLRNS (1365 aa). Asparagine 180 carries N-linked (GlcNAc...) asparagine glycosylation. Catalysis depends on residues serine 404 and aspartate 518. 3 N-linked (GlcNAc...) asparagine glycosylation sites follow: asparagine 525, asparagine 626, and asparagine 637. Residue histidine 659 is part of the active site. N-linked (GlcNAc...) asparagine glycans are attached at residues asparagine 715, asparagine 764, asparagine 787, asparagine 801, asparagine 830, asparagine 926, asparagine 1227, asparagine 1280, asparagine 1289, and asparagine 1387. The necessary for membrane localization stretch occupies residues 1408 to 1450; sequence QLLPDKAEEPSNALYWAVPVAAIGGLAVGILGVMLWRTVKPVQ. The helical transmembrane segment at 1423-1443 threads the bilayer; it reads WAVPVAAIGGLAVGILGVMLW. The Cytoplasmic segment spans residues 1444-1478; it reads RTVKPVQQEEEEEDTLPNTSVTQDAVSEKRLKAGN. The disordered stretch occupies residues 1451-1478; sequence QEEEEEDTLPNTSVTQDAVSEKRLKAGN. Over residues 1459 to 1468 the composition is skewed to polar residues; it reads LPNTSVTQDA. Residues 1469 to 1478 are compositionally biased toward basic and acidic residues; that stretch reads VSEKRLKAGN.

This sequence belongs to the 'GDSL' lipolytic enzyme family. Phospholipase B1 subfamily. Post-translationally, undergoes proteolytic cleavage in the ileum.

It localises to the apical cell membrane. The enzyme catalyses a 1,2-diacyl-sn-glycero-3-phosphocholine + H2O = a 1-acyl-sn-glycero-3-phosphocholine + a fatty acid + H(+). It catalyses the reaction a 1-O-alkyl-2-acyl-sn-glycero-3-phosphocholine + H2O = a 1-O-alkyl-sn-glycero-3-phosphocholine + a fatty acid + H(+). It carries out the reaction a 1-acyl-sn-glycero-3-phosphocholine + H2O = sn-glycerol 3-phosphocholine + a fatty acid + H(+). The catalysed reaction is a triacylglycerol + H2O = a diacylglycerol + a fatty acid + H(+). The enzyme catalyses 1,2-dihexadecanoyl-sn-glycero-3-phosphocholine + H2O = 1-hexadecanoyl-sn-glycero-3-phosphocholine + hexadecanoate + H(+). It catalyses the reaction 1-hexadecanoyl-2-(9Z-octadecenoyl)-sn-glycero-3-phosphocholine + H2O = 1-hexadecanoyl-sn-glycero-3-phosphocholine + (9Z)-octadecenoate + H(+). It carries out the reaction 1,2-di-(9Z-octadecenoyl)-sn-glycero-3-phosphocholine + H2O = 1-(9Z-octadecenoyl)-sn-glycero-3-phosphocholine + (9Z)-octadecenoate + H(+). The catalysed reaction is 1-hexadecanoyl-2-(9Z,12Z-octadecadienoyl)-sn-glycero-3-phosphocholine + H2O = (9Z,12Z)-octadecadienoate + 1-hexadecanoyl-sn-glycero-3-phosphocholine + H(+). The enzyme catalyses 1-hexadecanoyl-2-(9Z,12Z-octadecadienoyl)-sn-glycero-3-phosphocholine + H2O = 2-(9Z,12Z-octadecadienoyl)-sn-glycero-3-phosphocholine + hexadecanoate + H(+). It catalyses the reaction 1-hexadecanoyl-2-(9Z-octadecenoyl)-sn-glycero-3-phosphoethanolamine + H2O = 1-hexadecanoyl-sn-glycero-3-phosphoethanolamine + (9Z)-octadecenoate + H(+). It carries out the reaction 1-hexadecanoyl-2-(9Z-octadecenoyl)-sn-glycero-3-phospho-(1'-sn-glycerol) + H2O = 1-hexadecanoyl-sn-glycero-3-phospho-(1'-sn-glycerol) + (9Z)-octadecenoate + H(+). The catalysed reaction is 1,2-dihexadecanoyl-sn-glycero-3-phosphocholine + 2 H2O = sn-glycerol 3-phosphocholine + 2 hexadecanoate + 2 H(+). The enzyme catalyses 1-O-hexadecyl-2-(9Z)-octadecenoyl-sn-glycero-3-phosphocholine + H2O = 1-O-hexadecyl-sn-glycero-3-phosphocholine + (9Z)-octadecenoate + H(+). It catalyses the reaction 1-hexadecanoyl-sn-glycero-3-phosphocholine + H2O = sn-glycerol 3-phosphocholine + hexadecanoate + H(+). It carries out the reaction 1,2,3-tri-(9Z-octadecenoyl)-glycerol + H2O = di-(9Z)-octadecenoylglycerol + (9Z)-octadecenoate + H(+). The catalysed reaction is 1-hexadecanoyl-2-(9Z)-octadecenoyl-3-octadecanoyl-sn-glycerol + H2O = 1-hexadecanoyl-2-(9Z-octadecenoyl)-sn-glycerol + octadecanoate + H(+). The enzyme catalyses 1,3-dihexadecanoyl-2-(9Z-octadecenoyl)glycerol + H2O = 1,3-dihexadecanoylglycerol + (9Z)-octadecenoate + H(+). It catalyses the reaction 1,3-dihexadecanoyl-2-(9Z-octadecenoyl)glycerol + H2O = 1-hexadecanoyl-2-(9Z-octadecenoyl)-glycerol + hexadecanoate + H(+). It carries out the reaction 1-hexadecanoyl-2-(9Z)-octadecenoyl-3-octadecanoyl-sn-glycerol + H2O = 1-hexadecanoyl-3-octadecanoyl-sn-glycerol + (9Z)-octadecenoate + H(+). The catalysed reaction is 1-hexadecanoyl-2-(9Z)-octadecenoyl-3-octadecanoyl-sn-glycerol + H2O = 2-(9Z-octadecenoyl)-3-octadecanoyl-sn-glycerol + hexadecanoate + H(+). The enzyme catalyses 1-octadecanoyl-2-(9Z,12Z)-octadecadienoyl-sn-glycerol + H2O = 1-octadecanoyl-sn-glycerol + (9Z,12Z)-octadecadienoate + H(+). It catalyses the reaction 1,2-di-(9Z-octadecenoyl)-sn-glycerol + H2O = 1-(9Z-octadecenoyl)-sn-glycerol + (9Z)-octadecenoate + H(+). It carries out the reaction 2,3-di-(9Z)-octadecenoyl-sn-glycerol + H2O = 3-(9Z-octadecenoyl)-sn-glycerol + (9Z)-octadecenoate + H(+). The catalysed reaction is 1,3-di-(9Z-octadecenoyl)-glycerol + H2O = 1-(9Z-octadecenoyl)-glycerol + (9Z)-octadecenoate + H(+). The enzyme catalyses 1-(9Z-octadecenoyl)-glycerol + H2O = glycerol + (9Z)-octadecenoate + H(+). It catalyses the reaction 2-(9Z-octadecenoyl)-glycerol + H2O = glycerol + (9Z)-octadecenoate + H(+). In terms of biological role, calcium-independent membrane-associated phospholipase that catalyzes complete diacylation of phospholipids by hydrolyzing both sn-1 and sn-2 fatty acyl chains attached to the glycerol backbone (phospholipase B activity). Has dual phospholipase and lysophospholipase activities toward diacylphospholipids. Preferentially cleaves sn-2 ester bonds over sn-1 bonds. Acts as a lipase toward glycerolipid substrates. Hydrolyzes fatty acyl chains of diacylglycerols with preference for the sn-2 position and of triacylglycerols with not positional selectivity. May also hydrolyze long chain retinyl esters such as retinyl palmitate. May contribute to digestion of dietary phospholipids, glycerolipids and retinoids, facilitating lipid absorption at the brush border. The polypeptide is Phospholipase B1, membrane-associated (Plb1) (Mus musculus (Mouse)).